A 382-amino-acid chain; its full sequence is Mannitol-1-phosphate 5-dehydrogenase (382 aa).

3 to 14 serves as a coordination point for NAD(+); it reads ALHFGAGNIGRG.

The protein belongs to the mannitol dehydrogenase family.

It catalyses the reaction D-mannitol 1-phosphate + NAD(+) = beta-D-fructose 6-phosphate + NADH + H(+). The sequence is that of Mannitol-1-phosphate 5-dehydrogenase from Salmonella agona (strain SL483).